A 459-amino-acid polypeptide reads, in one-letter code: Neuronal acetylcholine receptor subunit beta-2 (459 aa).

The Extracellular portion of the chain corresponds to L1 to K203. N-linked (GlcNAc...) asparagine glycans are attached at residues N21 and N138. A disulfide bridge connects residues C125 and C139. The helical transmembrane segment at P204–L228 threads the bilayer. The Cytoplasmic segment spans residues P229–K235. Residues V236–S254 form a helical membrane-spanning segment. Residues K255–K269 are Extracellular-facing. A helical membrane pass occupies residues Y270 to V291. At H292–R421 the chain is on the cytoplasmic side. A helical membrane pass occupies residues L422–V440.

Belongs to the ligand-gated ion channel (TC 1.A.9) family. Acetylcholine receptor (TC 1.A.9.1) subfamily. Beta-2/CHRNB2 sub-subfamily. As to quaternary structure, neuronal AChR is a heteropentamer composed of two different types of subunits: alpha and beta. CHRNB2/Beta-2 subunit can be combined to CHRNA2/alpha-2, CHRNA3/alpha-3 or CHRNA4/alpha-4, CHRNA5/alpha-5, CHRNA6/alpha-6 and CHRNB3/beta-3 to give rise to functional receptors.

The protein resides in the synaptic cell membrane. It is found in the cell membrane. It catalyses the reaction Ca(2+)(in) = Ca(2+)(out). The catalysed reaction is K(+)(in) = K(+)(out). The enzyme catalyses Na(+)(in) = Na(+)(out). Its activity is regulated as follows. Activated by a myriad of ligands such as acetylcholine, cytisine, nicotine, choline and epibatidine. nAChR activity is inhibited by the antagonist alpha-conotoxins BuIA, PnIA, PnIC, GID and MII, small disulfide-constrained peptides from cone snails. In terms of biological role, component of neuronal acetylcholine receptors (nAChRs) that function as pentameric, ligand-gated cation channels with high calcium permeability among other activities. nAChRs are excitatory neurotrasnmitter receptors formed by a collection of nAChR subunits known to mediate synaptic transmission in the nervous system and the neuromuscular junction. Each nAchR subunit confers differential attributes to channel properties, including activation, deactivation and desensitization kinetics, pH sensitivity, cation permeability, and binding to allosteric modulators. CHRNB2 forms heteropentameric neuronal acetylcholine receptors with CHRNA2, CHRNA3, CHRNA4 and CHRNA6, as well as CHRNA5 and CHRNB3 as accesory subunits. The sequence is that of Neuronal acetylcholine receptor subunit beta-2 (chrnb2) from Carassius auratus (Goldfish).